Reading from the N-terminus, the 70-residue chain is Small ribosomal subunit protein bS21 (70 aa).

This sequence belongs to the bacterial ribosomal protein bS21 family.

In Nitrosospira multiformis (strain ATCC 25196 / NCIMB 11849 / C 71), this protein is Small ribosomal subunit protein bS21.